A 115-amino-acid chain; its full sequence is NADH-ubiquinone oxidoreductase chain 3 (115 aa).

The next 3 membrane-spanning stretches (helical) occupy residues 3–23 (LVIALLINTGLATILVMVAFW), 55–75 (FFLVAITFLLFDLEIAILLPI), and 87–107 (LLSLSGVLLALLTLGLAYEWL).

This sequence belongs to the complex I subunit 3 family. As to quaternary structure, core subunit of respiratory chain NADH dehydrogenase (Complex I) which is composed of 45 different subunits. Interacts with TMEM186. Interacts with TMEM242.

Its subcellular location is the mitochondrion inner membrane. It carries out the reaction a ubiquinone + NADH + 5 H(+)(in) = a ubiquinol + NAD(+) + 4 H(+)(out). Core subunit of the mitochondrial membrane respiratory chain NADH dehydrogenase (Complex I) which catalyzes electron transfer from NADH through the respiratory chain, using ubiquinone as an electron acceptor. Essential for the catalytic activity of complex I. The sequence is that of NADH-ubiquinone oxidoreductase chain 3 from Ornithorhynchus anatinus (Duckbill platypus).